Consider the following 589-residue polypeptide: Sphingosine-1-phosphate lyase (589 aa).

Residues 1–58 (MSGVSNKTVSINGWYGMPIHLLREEGDFAQFMILTINELKIAIHGYLRNTPWYNMLKD) are Lumenal-facing. The N-linked (GlcNAc...) asparagine glycan is linked to Asn-6. A helical transmembrane segment spans residues 59-76 (YLFVIFCYKLISNFFYLL). The Cytoplasmic segment spans residues 77–589 (KVYGPVRLAV…LGPGEDTATK (513 aa)). An N6-(pyridoxal phosphate)lysine modification is found at Lys-380.

The protein belongs to the group II decarboxylase family. Sphingosine-1-phosphate lyase subfamily. Homodimer. Pyridoxal 5'-phosphate serves as cofactor. Glycosylated.

Its subcellular location is the endoplasmic reticulum membrane. The catalysed reaction is sphinganine 1-phosphate = hexadecanal + phosphoethanolamine. It carries out the reaction (4R)-hydroxysphinganine 1-phosphate = (2R)-hydroxyhexadecanal + phosphoethanolamine. The protein operates within lipid metabolism; sphingolipid metabolism. Its function is as follows. Sphingosine-1-phosphate lyase that cleaves phosphorylated sphingoid bases (PSBs), such as sphingosine-1-phosphate, into fatty aldehydes and phosphoethanolamine. Prefers C-16 dihydrosphingosine-l-phosphate (DHS-P) as a substrate. Regulates intracellular levels of sphingolipid long-chain base phosphates (LCBPs). Plays a role in the regulation of global responses to nutrient deprivation in yeast. This chain is Sphingosine-1-phosphate lyase, found in Saccharomyces cerevisiae (strain ATCC 204508 / S288c) (Baker's yeast).